The chain runs to 481 residues: ATP synthase subunit beta (481 aa).

Gly160 to Thr167 is an ATP binding site.

It belongs to the ATPase alpha/beta chains family. As to quaternary structure, F-type ATPases have 2 components, CF(1) - the catalytic core - and CF(0) - the membrane proton channel. CF(1) has five subunits: alpha(3), beta(3), gamma(1), delta(1), epsilon(1). CF(0) has three main subunits: a(1), b(2) and c(9-12). The alpha and beta chains form an alternating ring which encloses part of the gamma chain. CF(1) is attached to CF(0) by a central stalk formed by the gamma and epsilon chains, while a peripheral stalk is formed by the delta and b chains.

It localises to the cell inner membrane. It carries out the reaction ATP + H2O + 4 H(+)(in) = ADP + phosphate + 5 H(+)(out). In terms of biological role, produces ATP from ADP in the presence of a proton gradient across the membrane. The catalytic sites are hosted primarily by the beta subunits. The sequence is that of ATP synthase subunit beta from Stigmatella aurantiaca.